A 574-amino-acid chain; its full sequence is VAO-type flavoprotein oxidase VAO615 (574 aa).

Positions 1–17 are cleaved as a signal peptide; that stretch reads MPASLLRFLALAGTAVG. Intrachain disulfides connect cysteine 28/cysteine 572, cysteine 64/cysteine 77, cysteine 108/cysteine 118, and cysteine 450/cysteine 476. An N-linked (GlcNAc...) asparagine glycan is attached at asparagine 47. Asparagine 105 carries N-linked (GlcNAc...) asparagine glycosylation. Positions 120–299 constitute an FAD-binding PCMH-type domain; it reads LGNYPSYVVN…LSMTARLHRD (180 aa). N-linked (GlcNAc...) asparagine glycosylation is found at asparagine 129, asparagine 211, asparagine 310, asparagine 346, and asparagine 438. The 6-(S-cysteinyl)-8alpha-(pros-histidyl)-FAD (His-Cys) cross-link spans 157–222; the sequence is HDYLGKSTGK…TGHRIVGGTC (66 aa).

This sequence belongs to the oxygen-dependent FAD-linked oxidoreductase family. FAD is required as a cofactor. Post-translationally, the FAD cofactor is bound via a bicovalent 6-S-cysteinyl, 8alpha-N1-histidyl FAD linkage.

The protein resides in the secreted. Functionally, probably oxidoreductase that, when reduced, rapidly reacts with molecular oxygen, a hallmark of flavoprotein oxidases. A large panel of alcohols, including carbohydrates, steroids and secondary alcohols were tested as potential substrates, but none has been identified so far. This Thermothelomyces thermophilus (strain ATCC 42464 / BCRC 31852 / DSM 1799) (Sporotrichum thermophile) protein is VAO-type flavoprotein oxidase VAO615.